The following is a 296-amino-acid chain: Ribosomal protein L11 methyltransferase (296 aa).

Thr-151, Gly-172, Asp-194, and Asn-233 together coordinate S-adenosyl-L-methionine.

This sequence belongs to the methyltransferase superfamily. PrmA family.

The protein localises to the cytoplasm. The enzyme catalyses L-lysyl-[protein] + 3 S-adenosyl-L-methionine = N(6),N(6),N(6)-trimethyl-L-lysyl-[protein] + 3 S-adenosyl-L-homocysteine + 3 H(+). Its function is as follows. Methylates ribosomal protein L11. This is Ribosomal protein L11 methyltransferase from Thiobacillus denitrificans (strain ATCC 25259 / T1).